Reading from the N-terminus, the 377-residue chain is MADFLPSRSVLSVCFPGCVLTNGEAEQQRKSKEIDKCLSREKTYVKRLVKILLLGAGESGKSTFLKQMRIIHGQDFDQRAREEFRPTIYSNVIKGMRVLVDAREKLHIPWGDNKNQLHGDKLMAFDTRAPMAAQGMVETRVFLQYLPAIRALWEDSGIQNAYDRRREFQLGESVKYFLDNLDKLGVPDYIPSQQDILLARRPTKGIHEYDFEIKNVPFKMVDVGGQRSERKRWFECFDSVTSILFLVSSSEFDQVLMEDRQTNRLTESLNIFETIVNNRVFSNVSIILFLNKTDLLEEKVQVVSIKDYFLEFEGDPHCLRDVQKFLVECFRGKRRDQQQRPLYHHFTTAINTENIRLVFRDVKDTILHDNLKQLMLQ.

Residues Cys-14 and Cys-18 are each lipidated (S-palmitoyl cysteine). In terms of domain architecture, G-alpha spans 47 to 377 (RLVKILLLGA…HDNLKQLMLQ (331 aa)). The G1 motif stretch occupies residues 50-63 (KILLLGAGESGKST). Residues 58–63 (ESGKST), Ser-173, and 197–200 (LLAR) each bind GTP. Position 62 (Ser-62) interacts with Mg(2+). The tract at residues 195 to 203 (DILLARRPT) is G2 motif. A Mg(2+)-binding site is contributed by Thr-203. Thr-203 is modified (phosphothreonine). The segment at 218–227 (FKMVDVGGQR) is G3 motif. Residues 287 to 294 (ILFLNKTD) are G4 motif. GTP is bound by residues 291–294 (NKTD) and Ala-349. The tract at residues 347–352 (TTAINT) is G5 motif.

It belongs to the G-alpha family. G(12) subfamily. In terms of assembly, g proteins are composed of 3 units; alpha, beta and gamma. The alpha chain contains the guanine nucleotide binding site. Interacts with UBXD5. Interacts with HAX1. Interacts (in GTP-bound form) with PPP5C (via TPR repeats); activates PPP5C phosphatase activity and translocates PPP5C to the cell membrane. Interacts with RGS22. Interacts (in GTP-bound form) with ARHGEF1. Interacts (in GTP-bound form) with ARHGEF11 (via RGS domain). Interacts (in GTP-bound form) with ARHGEF12 (via RGS domain). Interacts with CTNND1. Interacts with GAS2L2. Interacts with GPR35. Interacts with GPR174. Post-translationally, phosphorylation on Thr-203 destabilizes the heterotrimer of alpha, beta and gamma, and inhibits Rho activation. In terms of tissue distribution, expressed in brain and testis, as well as in kidney and sperm (at protein level).

The protein resides in the membrane. Its subcellular location is the melanosome. It localises to the cytoplasm. It is found in the nucleus. Guanine nucleotide-binding proteins (G proteins) are involved as modulators or transducers in various transmembrane signaling systems. Activates effector molecule RhoA by binding and activating RhoGEFs (ARHGEF1/p115RhoGEF, ARHGEF11/PDZ-RhoGEF and ARHGEF12/LARG). GNA13-dependent Rho signaling subsequently regulates transcription factor AP-1 (activating protein-1). Promotes tumor cell invasion and metastasis by activating Rho/ROCK signaling pathway. Inhibits CDH1-mediated cell adhesion in a process independent from Rho activation. In lymphoid follicles, transmits P2RY8- and S1PR2-dependent signals that lead to inhibition of germinal center (GC) B cell growth and migration outside the GC niche. The sequence is that of Guanine nucleotide-binding protein subunit alpha-13 (Gna13) from Mus musculus (Mouse).